We begin with the raw amino-acid sequence, 182 residues long: uncharacterized protein (182 aa).

2 disordered regions span residues methionine 1–serine 49 and glutamine 126–glutamine 171. Over residues glutamate 17–glycine 39 the composition is skewed to basic and acidic residues.

This is an uncharacterized protein from Homo sapiens (Human).